A 475-amino-acid polypeptide reads, in one-letter code: Sulfate adenylyltransferase subunit 1 (475 aa).

The tr-type G domain maps to 25 to 239 (KSLLRFLTCG…EVLETVEIQR (215 aa)). Positions 34-41 (GSVDDGKS) are G1. GTP is bound at residue 34-41 (GSVDDGKS). A G2 region spans residues 92–96 (GITID). The interval 113–116 (DTPG) is G3. GTP-binding positions include 113–117 (DTPGH) and 168–171 (NKMD). Residues 168–171 (NKMD) form a G4 region. Residues 206-208 (SAL) are G5.

The protein belongs to the TRAFAC class translation factor GTPase superfamily. Classic translation factor GTPase family. CysN/NodQ subfamily. Heterodimer composed of CysD, the smaller subunit, and CysN.

It catalyses the reaction sulfate + ATP + H(+) = adenosine 5'-phosphosulfate + diphosphate. It functions in the pathway sulfur metabolism; hydrogen sulfide biosynthesis; sulfite from sulfate: step 1/3. Its function is as follows. With CysD forms the ATP sulfurylase (ATPS) that catalyzes the adenylation of sulfate producing adenosine 5'-phosphosulfate (APS) and diphosphate, the first enzymatic step in sulfur assimilation pathway. APS synthesis involves the formation of a high-energy phosphoric-sulfuric acid anhydride bond driven by GTP hydrolysis by CysN coupled to ATP hydrolysis by CysD. This is Sulfate adenylyltransferase subunit 1 from Shigella dysenteriae serotype 1 (strain Sd197).